The chain runs to 264 residues: Zinc transporter ZupT (264 aa).

Helical transmembrane passes span 8–28, 36–56, 75–95, 121–141, and 148–168; these read AFIL…IAFV, FLSV…MIEI, WLTV…DKLI, GLMT…ATFI, and SIAI…GIAV. Residues N132 and E135 each contribute to the Fe(2+) site. Zn(2+) contacts are provided by E135 and H160. Positions 161, 164, and 193 each coordinate Fe(2+). E164 is a Zn(2+) binding site. The next 3 helical transmembrane spans lie at 197-217, 219-239, and 244-264; these read AIIG…GAIF, AVAG…AEEY, and LAIY…LLFI.

Belongs to the ZIP transporter (TC 2.A.5) family. ZupT subfamily.

It localises to the cell membrane. The catalysed reaction is Zn(2+)(in) = Zn(2+)(out). Functionally, mediates zinc uptake. May also transport other divalent cations. The sequence is that of Zinc transporter ZupT from Streptococcus mutans serotype c (strain ATCC 700610 / UA159).